The primary structure comprises 279 residues: Pleckstrin homology domain-containing family F member 1 (279 aa).

Positions 35–131 (VLLGEGVLTK…WISHIEECVR (97 aa)) constitute a PH domain. The FYVE-type zinc-finger motif lies at 152 to 212 (DKATDICMRC…VCSLCYRELA (61 aa)). The Zn(2+) site is built by C158, C161, C175, C178, C183, C186, C204, and C207. Positions 219 to 264 (EAKERFRGSPGQLTHLGSTMCGASSGDDDDSDEDREGSGDGDWPTQ) are disordered. A compositionally biased stretch (acidic residues) spans 244-253 (GDDDDSDEDR).

Its subcellular location is the nucleus. The protein localises to the cytoplasm. The protein resides in the perinuclear region. It localises to the lysosome. Its function is as follows. May induce apoptosis through the lysosomal-mitochondrial pathway. Translocates to the lysosome initiating the permeabilization of lysosomal membrane (LMP) and resulting in the release of CTSD and CTSL to the cytoplasm. Triggers the caspase-independent apoptosis by altering mitochondrial membrane permeabilization (MMP) resulting in the release of PDCD8. The sequence is that of Pleckstrin homology domain-containing family F member 1 (Plekhf1) from Rattus norvegicus (Rat).